Here is a 521-residue protein sequence, read N- to C-terminus: Type-1 glutamine synthetase 2 (521 aa).

In terms of domain architecture, GS beta-grasp spans 76 to 176 (NQIKISKSPF…FLMDFIGTNG (101 aa)). Residues 183-521 (PRSTLKKVIK…WELERYLEII (339 aa)) enclose the GS catalytic domain.

It belongs to the glutamine synthetase family.

It carries out the reaction L-glutamate + NH4(+) + ATP = L-glutamine + ADP + phosphate + H(+). The chain is Type-1 glutamine synthetase 2 (glnA2) from Dictyostelium discoideum (Social amoeba).